The sequence spans 610 residues: Tyrosine-protein kinase Drl (610 aa).

Residues 1-20 (MAPNLLTIGLLLTLIASGQA) form the signal peptide. The Extracellular segment spans residues 21-242 (HLNIFLNLHE…RENLVPPASG (222 aa)). The region spanning 24 to 155 (IFLNLHEVLR…NLIFKRKKIC (132 aa)) is the WIF domain. Asparagine 63, asparagine 99, and asparagine 143 each carry an N-linked (GlcNAc...) asparagine glycan. The segment at 202-230 (QAPEKQRPVVTESPVGRGNSGGSKRDFDP) is disordered. A helical transmembrane segment spans residues 243 to 263 (LVTLIVGGILALVLVSTLILI). Residues 264–610 (AYCAKGPSKR…EFHTQITRYV (347 aa)) are Cytoplasmic-facing. Positions 343-606 (VRLSCLVQEG…ICLSEFHTQI (264 aa)) constitute a Protein kinase domain. ATP-binding positions include 349 to 357 (VQEGNFGRI) and lysine 371. Aspartate 468 serves as the catalytic Proton acceptor. Tyrosine 498 is modified (phosphotyrosine; by autocatalysis).

The protein belongs to the protein kinase superfamily. Tyr protein kinase family. In the embryonic abdominal hemisegment, expression is restricted to cell body, axon and growth cone of a cluster of 20 ventral nerve cord interneurons. During muscle growth and attachment events in the embryonic abdominal hemisegment, expression is in somatic muscle fibers 21-23 at 10-13 hours and 2 patches of approximately 15 neighboring epidermal cells (dorsal and ventral attachment sites) at 6-13 hours.

Its subcellular location is the cell membrane. The enzyme catalyses L-tyrosyl-[protein] + ATP = O-phospho-L-tyrosyl-[protein] + ADP + H(+). Probable coreceptor of Wnt proteins. Involved in neuronal pathway recognition and ventral muscle attachment site selection. Non-vital for development. May be part of a signal transduction cascade involved in learning and possibly memory. The sequence is that of Tyrosine-protein kinase Drl (drl) from Drosophila melanogaster (Fruit fly).